The chain runs to 95 residues: Protein TusB (95 aa).

It belongs to the DsrH/TusB family. Heterohexamer, formed by a dimer of trimers. The hexameric TusBCD complex contains 2 copies each of TusB, TusC and TusD. The TusBCD complex interacts with TusE.

The protein resides in the cytoplasm. Part of a sulfur-relay system required for 2-thiolation of 5-methylaminomethyl-2-thiouridine (mnm(5)s(2)U) at tRNA wobble positions. This chain is Protein TusB, found in Klebsiella pneumoniae (strain 342).